Reading from the N-terminus, the 222-residue chain is Charged multivesicular body protein 3 (222 aa).

The N-myristoyl glycine moiety is linked to residue glycine 2. The tract at residues 2-113 (GLFGKTQEKP…LQKSTEVMKA (112 aa)) is intramolecular interaction with C-terminus. The stretch at 22–54 (KIRKEMRVVDRQIRDIQREEEKVKRSVKDAAKK) forms a coiled coil. Important for autoinhibitory function stretches follow at residues 59 to 64 (VCIVLA) and 168 to 169 (IL). Positions 141–222 (EEMLEDTFES…MQSRLATLRS (82 aa)) form a coiled coil. The interval 151 to 220 (MDDQEEMEEE…EAMQSRLATL (70 aa)) is intramolecular interaction with N-terminus. The interval 151 to 222 (MDDQEEMEEE…MQSRLATLRS (72 aa)) is interaction with VPS4A. Lysine 179 is covalently cross-linked (Glycyl lysine isopeptide (Lys-Gly) (interchain with G-Cter in ubiquitin)). Residues 180–222 (APSKVTDALPEPEPPGAMAASEDEEEEEEALEAMQSRLATLRS) are disordered. At serine 200 the chain carries Phosphoserine. Acidic residues predominate over residues 200–210 (SEDEEEEEEAL). Positions 201–211 (EDEEEEEEALE) match the MIT-interacting motif motif. Interaction with STAMBP regions lie at residues 203-207 (EEEEE) and 221-222 (RS).

This sequence belongs to the SNF7 family. Probable core component of the endosomal sorting required for transport complex III (ESCRT-III). ESCRT-III components are thought to multimerize to form a flat lattice on the perimeter membrane of the endosome. Several assembly forms of ESCRT-III may exist that interact and act sequentially. Forms a metastable monomer in solution; its core structure (without part of the putative autoinhibitory C-terminal acidic region) oligomerizes into a flat lattice via two different dimerization interfaces. In vitro, heteromerizes with CHMP2A (but not CHMP4) to form helical tubular structures that expose membrane-interacting sites on the outside whereas VPS4B can associate on the inside of the tubule. May interact with IGFBP7; the relevance of such interaction however remains unclear. Interacts with CHMP2A. Interacts with CHMP4A; the interaction requires the release of CHMP4A autoinhibition. Interacts with VPS4A. Interacts with STAMBP; the interaction appears to relieve the autoinhibition of CHMP3. Interacts with VTA1. As to expression, widely expressed. Expressed in heart, brain, placenta, lung, liver, skeletal muscle, kidney and pancreas.

The protein resides in the cytoplasm. The protein localises to the cytosol. It localises to the membrane. Its subcellular location is the endosome. It is found in the late endosome membrane. Its function is as follows. Probable core component of the endosomal sorting required for transport complex III (ESCRT-III) which is involved in multivesicular bodies (MVBs) formation and sorting of endosomal cargo proteins into MVBs. MVBs contain intraluminal vesicles (ILVs) that are generated by invagination and scission from the limiting membrane of the endosome and mostly are delivered to lysosomes enabling degradation of membrane proteins, such as stimulated growth factor receptors, lysosomal enzymes and lipids. The MVB pathway appears to require the sequential function of ESCRT-O, -I,-II and -III complexes. ESCRT-III proteins mostly dissociate from the invaginating membrane before the ILV is released. The ESCRT machinery also functions in topologically equivalent membrane fission events, such as the terminal stages of cytokinesis and the budding of enveloped viruses (HIV-1 and other lentiviruses). ESCRT-III proteins are believed to mediate the necessary vesicle extrusion and/or membrane fission activities, possibly in conjunction with the AAA ATPase VPS4. Selectively binds to phosphatidylinositol 3,5-bisphosphate PtdIns(3,5)P2 and PtdIns(3,4)P2 in preference to other phosphoinositides tested. Involved in late stages of cytokinesis. Plays a role in endosomal sorting/trafficking of EGF receptor. Isoform 2 prevents stress-mediated cell death and accumulation of reactive oxygen species when expressed in yeast cells. In Homo sapiens (Human), this protein is Charged multivesicular body protein 3 (CHMP3).